A 334-amino-acid chain; its full sequence is GTP 3',8-cyclase (334 aa).

Residues 13–239 enclose the Radical SAM core domain; sequence RFHRKFYYLR…KVKAVNDGPA (227 aa). GTP is bound at residue Arg-22. The [4Fe-4S] cluster site is built by Cys-29 and Cys-33. Tyr-35 lines the S-adenosyl-L-methionine pocket. Residue Cys-36 participates in [4Fe-4S] cluster binding. Arg-73 lines the GTP pocket. Gly-77 contributes to the S-adenosyl-L-methionine binding site. Thr-104 is a GTP binding site. An S-adenosyl-L-methionine-binding site is contributed by Ser-128. A GTP-binding site is contributed by Lys-165. Met-199 contributes to the S-adenosyl-L-methionine binding site. 2 residues coordinate [4Fe-4S] cluster: Cys-262 and Cys-265. 267–269 serves as a coordination point for GTP; sequence RLR. Cys-279 lines the [4Fe-4S] cluster pocket.

The protein belongs to the radical SAM superfamily. MoaA family. In terms of assembly, monomer and homodimer. [4Fe-4S] cluster is required as a cofactor.

The catalysed reaction is GTP + AH2 + S-adenosyl-L-methionine = (8S)-3',8-cyclo-7,8-dihydroguanosine 5'-triphosphate + 5'-deoxyadenosine + L-methionine + A + H(+). Its pathway is cofactor biosynthesis; molybdopterin biosynthesis. In terms of biological role, catalyzes the cyclization of GTP to (8S)-3',8-cyclo-7,8-dihydroguanosine 5'-triphosphate. This Vibrio atlanticus (strain LGP32) (Vibrio splendidus (strain Mel32)) protein is GTP 3',8-cyclase.